Here is a 309-residue protein sequence, read N- to C-terminus: Probable manganese-dependent inorganic pyrophosphatase (309 aa).

Residues His9, Asp13, Asp15, Asp75, His97, and Asp149 each coordinate Mn(2+).

The protein belongs to the PPase class C family. Requires Mn(2+) as cofactor.

Its subcellular location is the cytoplasm. It catalyses the reaction diphosphate + H2O = 2 phosphate + H(+). This Staphylococcus aureus (strain COL) protein is Probable manganese-dependent inorganic pyrophosphatase.